Reading from the N-terminus, the 598-residue chain is MRNKICEELNKSDIGKVVNLCGWVDRRRDHGGVIFIDLRDHSGFMQITINPEDGETLFKQAEILRNETVIMVNGIVNERPKDSINKNILTGELELKVKDLQILNQIKNNLPFPISVHDYENTKEELRLKYRYLDLRRGKLLKNLKTRHKIIKAVREYLDNSGFTEVETPLLTKSTPEGARDFLVPARLSNGEFFALPQSPQLFKQLLMVGGLDKYYQIAKCFRDEDLRADRQPEFTQLDIEMSFISEEEIISFNEKLIKNVWKNVLNINFNEEFPRMTWQEAMDNYGTDRPDTRYEMLLKNLGGILGNIGFNIFTKAIQNGGAIKSITIKDGNTSISNVRIKPGGDIFKVAQDAGAGGLAFIRVKGDELETIGAIKNNLNKDHISTILKITEAKDGDLILLGAGNTQIVNQSLDRVRQYIAKDLKLIEKDKWNFLWVTDFPMFEMNEEEKRFEALHHPFCSPKNIKLEDSKELKEKIESSTAHAYDLVLNGLELGGGSLRIHQAEMQREVLRTVGLTDNQINEKFGFLIEALEMGAPPHGGIAFGVDRITMLILGEDSIRETIAFPKNQQAKCLLTNAPSNVSKSQLKELDIEITIDE.

An L-aspartate-binding site is contributed by glutamate 177. Positions 201 to 204 are aspartate; the sequence is QLFK. Position 223 (arginine 223) interacts with L-aspartate. Residues 223–225 and glutamine 232 each bind ATP; that span reads RDE. Histidine 456 is a binding site for L-aspartate. Glutamate 493 contributes to the ATP binding site. Position 500 (arginine 500) interacts with L-aspartate. Residue 545-548 coordinates ATP; that stretch reads GVDR.

The protein belongs to the class-II aminoacyl-tRNA synthetase family. Type 1 subfamily. Homodimer.

It is found in the cytoplasm. The catalysed reaction is tRNA(Asx) + L-aspartate + ATP = L-aspartyl-tRNA(Asx) + AMP + diphosphate. In terms of biological role, aspartyl-tRNA synthetase with relaxed tRNA specificity since it is able to aspartylate not only its cognate tRNA(Asp) but also tRNA(Asn). Reaction proceeds in two steps: L-aspartate is first activated by ATP to form Asp-AMP and then transferred to the acceptor end of tRNA(Asp/Asn). This is Aspartate--tRNA(Asp/Asn) ligase from Prochlorococcus marinus subsp. pastoris (strain CCMP1986 / NIES-2087 / MED4).